A 939-amino-acid chain; its full sequence is Phosphoenolpyruvate carboxylase (939 aa).

Residues histidine 151 and lysine 593 contribute to the active site.

Belongs to the PEPCase type 1 family. Requires Mg(2+) as cofactor.

The catalysed reaction is oxaloacetate + phosphate = phosphoenolpyruvate + hydrogencarbonate. In terms of biological role, forms oxaloacetate, a four-carbon dicarboxylic acid source for the tricarboxylic acid cycle. The protein is Phosphoenolpyruvate carboxylase of Gloeobacter violaceus (strain ATCC 29082 / PCC 7421).